We begin with the raw amino-acid sequence, 467 residues long: Glycogen synthase (467 aa).

Position 15 (Lys-15) interacts with ADP-alpha-D-glucose.

Belongs to the glycosyltransferase 1 family. Bacterial/plant glycogen synthase subfamily.

It carries out the reaction [(1-&gt;4)-alpha-D-glucosyl](n) + ADP-alpha-D-glucose = [(1-&gt;4)-alpha-D-glucosyl](n+1) + ADP + H(+). It participates in glycan biosynthesis; glycogen biosynthesis. Functionally, synthesizes alpha-1,4-glucan chains using ADP-glucose. The protein is Glycogen synthase of Desulfitobacterium hafniense (strain DSM 10664 / DCB-2).